Reading from the N-terminus, the 445-residue chain is Glutamate-1-semialdehyde 2,1-aminomutase (445 aa).

N6-(pyridoxal phosphate)lysine is present on lysine 264.

Belongs to the class-III pyridoxal-phosphate-dependent aminotransferase family. HemL subfamily. Requires pyridoxal 5'-phosphate as cofactor.

It localises to the cytoplasm. It catalyses the reaction (S)-4-amino-5-oxopentanoate = 5-aminolevulinate. The protein operates within porphyrin-containing compound metabolism; protoporphyrin-IX biosynthesis; 5-aminolevulinate from L-glutamyl-tRNA(Glu): step 2/2. This is Glutamate-1-semialdehyde 2,1-aminomutase from Halobacterium salinarum (strain ATCC 29341 / DSM 671 / R1).